Reading from the N-terminus, the 795-residue chain is ATP-dependent RNA helicase DHX15 (795 aa).

Residues 1–108 (MSKRHRLDLG…HSTHAGHAGH (108 aa)) are disordered. Ser15 carries the phosphoserine modification. The segment covering 20-62 (AGTDGKDRDRDRDREDRSKDRDRERDRGDREREREKEKEKELR) has biased composition (basic and acidic residues). Low complexity predominate over residues 79–108 (ASHSAHSTHSAHSTHSTHSAHSTHAGHAGH). The region spanning 147 to 313 (TDILVRHQSF…FDNCPLLTIP (167 aa)) is the Helicase ATP-binding domain. 160-167 (GETGSGKT) contacts ATP. The short motif at 260 to 263 (DEAH) is the DEAH box element. The Helicase C-terminal domain maps to 338–518 (TVIQIHMCEE…SVVLQLKKLG (181 aa)). At Lys488 the chain carries N6-acetyllysine. Lys786 is covalently cross-linked (Glycyl lysine isopeptide (Lys-Gly) (interchain with G-Cter in SUMO2)).

Belongs to the DEAD box helicase family. DEAH subfamily. DDX15/PRP43 sub-subfamily. As to quaternary structure, component of the U11/U12 snRNPs that are part of the U12-type spliceosome. Identified in the Intron Large spliceosome complex (IL, also named intron lariat spliceosome), a post-mRNA release spliceosomal complex containing the excised intron, U2, U5 and U6 snRNPs, and splicing factors; the association may be transient. The IL complex exists in two distinct conformations, one with the DHX15 (ILS2) and one without (ILS1). Interacts with TFIP11 (via G-patch domain); indicative for a recruitment to the IL complex. Interacts with SSB/La. Interacts with GPATCH2 (via G-patch domain); promoting the RNA helicase activity. Interacts with NKRF (via G-patch domain); promoting the RNA helicase activity. Interacts with NLRP6. In terms of tissue distribution, ubiquitous.

It localises to the nucleus. Its subcellular location is the nucleolus. It catalyses the reaction ATP + H2O = ADP + phosphate + H(+). With respect to regulation, ATPase activity is enhanced upon binding to G-patch domain-containing proteins. G-patch domain-containing proteins act like a brace that tethers mobile sections of DHX15 together, stabilizing a functional conformation with high RNA affinity, thereby promoting the ATPase activity. Functionally, RNA helicase involved in mRNA processing and antiviral innate immunity. Pre-mRNA processing factor involved in disassembly of spliceosomes after the release of mature mRNA. In cooperation with TFIP11 seem to be involved in the transition of the U2, U5 and U6 snRNP-containing IL complex to the snRNP-free IS complex leading to efficient debranching and turnover of excised introns. Plays a key role in antiviral innate immunity by promoting both MAVS-dependent signaling and NLRP6 inflammasome. Acts as an RNA virus sensor: recognizes and binds viral double stranded RNA (dsRNA) and activates the MAVS-dependent signaling to produce interferon-beta and interferon lambda-3 (IFNL3). Involved in intestinal antiviral innate immunity together with NLRP6: recognizes and binds viral dsRNA and promotes activation of the NLRP6 inflammasome in intestinal epithelial cells to restrict infection by enteric viruses. The NLRP6 inflammasome acts by promoting maturation and secretion of IL18 in the extracellular milieu. Also involved in antibacterial innate immunity by promoting Wnt-induced antimicrobial protein expression in Paneth cells. The protein is ATP-dependent RNA helicase DHX15 of Homo sapiens (Human).